The primary structure comprises 53 residues: Small ribosomal subunit protein uS14 (53 aa).

Zn(2+)-binding residues include cysteine 17, cysteine 20, cysteine 36, and cysteine 39.

The protein belongs to the universal ribosomal protein uS14 family. Zinc-binding uS14 subfamily. In terms of assembly, part of the 30S ribosomal subunit. The cofactor is Zn(2+).

Binds 16S rRNA, required for the assembly of 30S particles. The chain is Small ribosomal subunit protein uS14 from Methanocaldococcus jannaschii (strain ATCC 43067 / DSM 2661 / JAL-1 / JCM 10045 / NBRC 100440) (Methanococcus jannaschii).